The chain runs to 146 residues: uncharacterized protein (146 aa).

A helical membrane pass occupies residues 7–24 (VIALFLVTGLTLYAIRLL).

The protein localises to the membrane. This is an uncharacterized protein from Haemophilus influenzae (strain ATCC 51907 / DSM 11121 / KW20 / Rd).